The following is a 158-amino-acid chain: Transmembrane protein 50B (158 aa).

An N-acetylalanine modification is found at alanine 2. Transmembrane regions (helical) follow at residues 28–48 (VVAG…AVVY), 56–76 (HAFH…NAVS), 98–118 (WLFI…WILF), and 128–148 (VYPG…TLIY).

The protein belongs to the UPF0220 family. In terms of assembly, may form homotrimers or homodimers.

It localises to the endoplasmic reticulum membrane. Its subcellular location is the golgi apparatus membrane. This is Transmembrane protein 50B (TMEM50B) from Bos taurus (Bovine).